The sequence spans 284 residues: UDP-N-acetylenolpyruvoylglucosamine reductase (284 aa).

Residues 12 to 174 (KIGGRVKYLV…TRVMMSFKRE (163 aa)) enclose the FAD-binding PCMH-type domain. Residue Arg-153 is part of the active site. Ser-203 acts as the Proton donor in catalysis. Glu-274 is a catalytic residue.

This sequence belongs to the MurB family. Requires FAD as cofactor.

The protein resides in the cytoplasm. The catalysed reaction is UDP-N-acetyl-alpha-D-muramate + NADP(+) = UDP-N-acetyl-3-O-(1-carboxyvinyl)-alpha-D-glucosamine + NADPH + H(+). It participates in cell wall biogenesis; peptidoglycan biosynthesis. Functionally, cell wall formation. The polypeptide is UDP-N-acetylenolpyruvoylglucosamine reductase (Thermotoga petrophila (strain ATCC BAA-488 / DSM 13995 / JCM 10881 / RKU-1)).